The following is a 394-amino-acid chain: Deoxyguanosinetriphosphate triphosphohydrolase-like protein (394 aa).

The tract at residues 1–36 (MSQAPYFVPRAPYAEDPSKSKGRRFKEDESRTRTPF) is disordered. The span at 25-36 (FKEDESRTRTPF) shows a compositional bias: basic and acidic residues. The region spanning 70–210 (RLTHTLEVAQ…AALADDIAYN (141 aa)) is the HD domain.

The protein belongs to the dGTPase family. Type 2 subfamily.

The chain is Deoxyguanosinetriphosphate triphosphohydrolase-like protein from Caulobacter vibrioides (strain ATCC 19089 / CIP 103742 / CB 15) (Caulobacter crescentus).